A 296-amino-acid chain; its full sequence is HTH-type transcriptional regulator GltR (296 aa).

The HTH lysR-type domain maps to 1 to 58; that stretch reads MNIQLLQVFLTTAREGSISKAALTLNYAQSNVTNKIQQLENDLQTKLFYRHSRGITLT. The H-T-H motif DNA-binding region spans 18–37; that stretch reads ISKAALTLNYAQSNVTNKIQ.

Belongs to the LysR transcriptional regulatory family.

Its function is as follows. Positive regulator of glutamate biosynthesis (gltAB genes). Negatively regulates its own expression. This Bacillus subtilis (strain 168) protein is HTH-type transcriptional regulator GltR (gltR).